A 664-amino-acid chain; its full sequence is MATTGKSATLEDARHGTGSPKMKGRENAKDTLCRNVTIYGRCRYEDKGCAFNHDPHKVNSGYQSDSNKKRLNVDSPSFTPSILSSNGSSPTSQSATMKKMATISPKAASAAPFQPRSISSRSNSSTPTTRPGTMTPDWSVAEVQEFVPQGFDTAHIGSLQGNGTAGVPSTSAFDPFVTAPNPLSAANAVGPVQANPFSHDTAAALNGAAFFANQSGFQQPVQYHMYAPIGPHSQNTLGYQRNVHDLFLPNDLREEMQKKAAATLQTLPNTQLPAQVDYFHSLVPLDLNHQKNATIFGFPSWVYKAQSSKDGNFYALRRLEGFRLTNEKAIRSVQAWKRVCNGSVVTVHDAFTSRSFQDSSLIFVTDYHPLSKTLAEQHLGAGNRFQGRHNTHIPEQVLWGYMTQIANALKAIHASQLAARIIDPSKILLTGRNRIRLNACAIMDVVQFDTQRSLAELQRQDLVNFGQLIVTLGANQPNVMHNPTKAMEHFTRAYTAQLKNSVFWLLNGLQKDQERNIDIFITGISSTLMSTFDSALHLDDQLTSDLSRELENGRLVRLMTKLNFVNERPEYEHDRQWSENGERYFLKIFRDYVFHQVDAQGDPVVDLGHVLMCLNKLDAGTDEKITLISRDEQSCFVVSYKELKKALESSFQALLKPSASRRLH.

2 disordered regions span residues 1-27 (MATT…GREN) and 54-134 (DPHK…PGTM). The C3H1-type zinc finger occupies 27-56 (NAKDTLCRNVTIYGRCRYEDKGCAFNHDPH). Residues 74 to 96 (DSPSFTPSILSSNGSSPTSQSAT) are compositionally biased toward polar residues. A compositionally biased stretch (low complexity) spans 115–131 (PRSISSRSNSSTPTTRP). The segment at 265-525 (QTLPNTQLPA…NIDIFITGIS (261 aa)) is pseudokinase domain. Residues Arg317, 366–373 (DYHPLSKT), and 425–426 (SK) each bind ATP. Positions 526–564 (STLMSTFDSALHLDDQLTSDLSRELENGRLVRLMTKLNF) form a coiled coil. The knob domain stretch occupies residues 565–664 (VNERPEYEHD…LKPSASRRLH (100 aa)).

This sequence belongs to the protein kinase superfamily. PAN3 family. As to quaternary structure, homodimer. Forms a heterotrimer with a catalytic subunit pan2 to form the poly(A)-nuclease (PAN) deadenylation complex. Interacts (via PAM-2 motif) with poly(A)-binding protein pab1 (via PABC domain), conferring substrate specificity of the enzyme complex.

It localises to the cytoplasm. In terms of biological role, regulatory subunit of the poly(A)-nuclease (PAN) deadenylation complex, one of two cytoplasmic mRNA deadenylases involved in mRNA turnover. PAN specifically shortens poly(A) tails of RNA and the activity is stimulated by poly(A)-binding protein pab1. PAN deadenylation is followed by rapid degradation of the shortened mRNA tails by the CCR4-NOT complex. Deadenylated mRNAs are then degraded by two alternative mechanisms, namely exosome-mediated 3'-5' exonucleolytic degradation, or deadenylation-dependent mRNA decaping and subsequent 5'-3' exonucleolytic degradation by xrn1. May also be involved in post-transcriptional maturation of mRNA poly(A) tails. pan3 acts as a positive regulator for PAN activity, recruiting the catalytic subunit pan2 to mRNA via its interaction with RNA and with pab1. This Aspergillus niger (strain ATCC MYA-4892 / CBS 513.88 / FGSC A1513) protein is PAN2-PAN3 deadenylation complex subunit PAN3.